The primary structure comprises 1946 residues: Integrin beta-like protein E (1946 aa).

An N-terminal signal peptide occupies residues 1 to 22 (MNNLFKFLFVLLAIFCPPISDL). At 23-1875 (VVSHGVPQQH…ATTQTTNNKT (1853 aa)) the chain is on the extracellular side. N107, N134, and N203 each carry an N-linked (GlcNAc...) asparagine glycan. In terms of domain architecture, EGF-like spans 423–460 (YGQNCDPTPPCDKGIPNEGILGDGKCMCINGYSGDKCD). 2 cysteine pairs are disulfide-bonded: C433–C448 and C450–C459. The VWFA domain maps to 514-699 (DVFVLVDVNV…AGLKSVLSNV (186 aa)). N705, N860, N1043, N1113, N1177, N1374, N1401, N1513, N1611, N1620, N1662, N1671, N1737, N1743, N1762, N1812, N1852, and N1873 each carry an N-linked (GlcNAc...) asparagine glycan. Residues 1876 to 1896 (VLTGAIAGAAAGTALIAAAAW) traverse the membrane as a helical segment. Topologically, residues 1897-1946 (KLLRKAAPPTDTFFSEAAFLGDGVNANPLYEQSASAAENPLYQSASDNTD) are cytoplasmic.

Belongs to the SIB family. As to quaternary structure, interacts with talA/talin.

It is found in the membrane. Implicated in cellular adhesion. This chain is Integrin beta-like protein E (sibE), found in Dictyostelium discoideum (Social amoeba).